Consider the following 124-residue polypeptide: Putative membrane protein insertion efficiency factor (124 aa).

Belongs to the UPF0161 family.

It localises to the cell inner membrane. Its function is as follows. Could be involved in insertion of integral membrane proteins into the membrane. The protein is Putative membrane protein insertion efficiency factor of Psychrobacter cryohalolentis (strain ATCC BAA-1226 / DSM 17306 / VKM B-2378 / K5).